The following is a 1697-amino-acid chain: Phosphatidylinositol 3-kinase 3 (1697 aa).

Disordered regions lie at residues 57-91, 169-229, 244-279, 310-376, 398-428, and 440-504; these read RSIN…TQPC, INNN…DSSI, KTTE…ENEI, KKNN…NSVG, SWTS…SGSS, and DLLK…NNDE. Low complexity-rich tracts occupy residues 60–87, 170–196, and 212–222; these read NNNN…NNNN and NNNSNNNNNIN. Composition is skewed to low complexity over residues 312–374 and 398–408; these read NNNN…TTNS and SWTSSKPTSSS. Composition is skewed to polar residues over residues 409 to 428 and 444 to 456; these read IGFA…SGSS and SPSS…SDIF. Residues 457–503 show a composition bias toward low complexity; that stretch reads NENNNNNNNNNNNNNNNNNNNNNNNNNNNNNNNNEELINNNNNNNND. Residues 737-823 enclose the PI3K-RBD domain; sequence PEFFVIRVHL…KGEIDLTMVE (87 aa). The 149-residue stretch at 888–1036 folds into the C2 PI3K-type domain; the sequence is VTENLQVRLL…QAIIIAFEFK (149 aa). The PIK helical domain maps to 1060–1238; sequence GNELPVVTME…RVLSSGFLRY (179 aa). Residues 1304 to 1581 enclose the PI3K/PI4K catalytic domain; that stretch reads IPEKCKSMDS…LIHESIGTLT (278 aa). Residues 1310–1316 are G-loop; it reads SMDSAKV. The segment at 1447–1455 is catalytic loop; sequence GIGDRHNDN. The segment at 1466 to 1492 is activation loop; it reads HIDFGHFLGNFKTFAGFQREKAPFVLT. The segment covering 1609 to 1625 has biased composition (low complexity); that stretch reads ASSLNLNKNKPSSQSKL. The interval 1609-1697 is disordered; that stretch reads ASSLNLNKNK…DTEKENSIDK (89 aa). Tandem repeats lie at residues 1622–1626, 1627–1631, 1632–1636, 1642–1646, and 1647–1651. The segment at 1622–1651 is 5 X 5 AA approximate repeats; that stretch reads QSKLDLSRSDLSRSDSSRSDSSRLDLSRSD. 2 stretches are compositionally biased toward basic and acidic residues: residues 1626 to 1681 and 1688 to 1697; these read DLSR…DKDN and DTEKENSIDK. Positions 1659–1672 are 7 X 2 AA tandem repeats of K-E; the sequence is KEKEKEKEKEKEKE.

It belongs to the PI3/PI4-kinase family.

It carries out the reaction a 1,2-diacyl-sn-glycero-3-phospho-(1D-myo-inositol) + ATP = a 1,2-diacyl-sn-glycero-3-phospho-(1D-myo-inositol-3-phosphate) + ADP + H(+). The sequence is that of Phosphatidylinositol 3-kinase 3 (pikC) from Dictyostelium discoideum (Social amoeba).